A 145-amino-acid chain; its full sequence is MSEQVETRLTPRERLTRGLAYSAVGPVDVTRGLLELGVGLGLQSARSTAAGLRRRYREGRLAREVAAAQETLAQELTAAQDVVANLPQALQDARTQRRSKHHLWIFAGIAAAILAGGAVAFSIVRRSSRPEPSPRPPSVEVQPRS.

Residues 104 to 124 (WIFAGIAAAILAGGAVAFSIV) traverse the membrane as a helical segment.

The protein belongs to the CwsA family. As to quaternary structure, interacts with CrgA and Wag31.

The protein localises to the cell membrane. Its function is as follows. Required for regulated cell division, cell wall synthesis and the maintenance of cell shape. The sequence is that of Cell wall synthesis protein CwsA from Mycobacterium tuberculosis (strain ATCC 25618 / H37Rv).